Consider the following 272-residue polypeptide: Probable feruloyl esterase C (272 aa).

A signal peptide spans 1-22; that stretch reads MVPTMIYSAILALSAFTPSVLA.

It belongs to the faeC family.

It localises to the secreted. The catalysed reaction is feruloyl-polysaccharide + H2O = ferulate + polysaccharide.. Its function is as follows. Involved in degradation of plant cell walls. Hydrolyzes the feruloyl-arabinose ester bond in arabinoxylans, and the feruloyl-galactose ester bond in pectin. Active against paranitrophenyl-acetate, methyl ferulate and wheat arabinoxylan. In Neosartorya fischeri (strain ATCC 1020 / DSM 3700 / CBS 544.65 / FGSC A1164 / JCM 1740 / NRRL 181 / WB 181) (Aspergillus fischerianus), this protein is Probable feruloyl esterase C (faeC).